The primary structure comprises 250 residues: Probable cytokinin riboside 5'-monophosphate phosphoribohydrolase LOGL6 (250 aa).

Residues E98, 116–117 (RK), and 133–139 (GYGTLEE) contribute to the substrate site.

Belongs to the LOG family. As to expression, expressed in roots, leaves, stems, tiller buds, shoot apex, immature inflorescences and flowers.

It catalyses the reaction N(6)-(dimethylallyl)adenosine 5'-phosphate + H2O = N(6)-dimethylallyladenine + D-ribose 5-phosphate. The catalysed reaction is 9-ribosyl-trans-zeatin 5'-phosphate + H2O = trans-zeatin + D-ribose 5-phosphate. Functionally, cytokinin-activating enzyme working in the direct activation pathway. Phosphoribohydrolase that converts inactive cytokinin nucleotides to the biologically active free-base forms. This Oryza sativa subsp. japonica (Rice) protein is Probable cytokinin riboside 5'-monophosphate phosphoribohydrolase LOGL6 (LOGL6).